Here is a 585-residue protein sequence, read N- to C-terminus: Frizzled-5 (585 aa).

Positions 1–26 are cleaved as a signal peptide; sequence MARPDPSAPPSLLLLLLAQLVGRAAA. The Extracellular portion of the chain corresponds to 27-238; sequence ASKAPVCQEI…ADERTFATFW (212 aa). The FZ domain occupies 28–150; sequence SKAPVCQEIT…RDAEVLCMDY (123 aa). 5 disulfide bridges follow: Cys-33/Cys-94, Cys-41/Cys-87, Cys-78/Cys-116, Cys-105/Cys-147, and Cys-109/Cys-133. Asn-47 carries N-linked (GlcNAc...) asparagine glycosylation. An N-linked (GlcNAc...) asparagine glycan is attached at Asn-151. Residues 156 to 179 are disordered; the sequence is TTAPPRPFPAKPTLPGPPGAPASG. The span at 159 to 175 shows a compositional bias: pro residues; sequence PPRPFPAKPTLPGPPGA. A helical membrane pass occupies residues 239–259; that stretch reads IGLWSVLCFISTSTTVATFLI. At 260–270 the chain is on the cytoplasmic side; it reads DMERFRYPERP. Residues 271-291 form a helical membrane-spanning segment; the sequence is IIFLSACYLCVSLGFLVRLVV. At 292–315 the chain is on the extracellular side; the sequence is GHASVACSREHNHIHYETTGPALC. The helical transmembrane segment at 316–336 threads the bilayer; the sequence is TIVFLLVYFFGMASSIWWVIL. The Cytoplasmic segment spans residues 337-358; the sequence is SLTWFLAAGMKWGNEAIAGYAQ. Residues 359 to 379 form a helical membrane-spanning segment; sequence YFHLAAWLIPSVKSITALALS. Residues 380-402 are Extracellular-facing; the sequence is SVDGDPVAGICYVGNQNLNSLRG. The chain crosses the membrane as a helical span at residues 403-423; it reads FVLGPLVLYLLVGTLFLLAGF. The Cytoplasmic portion of the chain corresponds to 424–449; sequence VSLFRIRSVIKQGGTKTDKLEKLMIR. The helical transmembrane segment at 450–470 threads the bilayer; that stretch reads IGIFTLLYTVPASIVVACYLY. Residues 471–500 are Extracellular-facing; that stretch reads EQHYRESWEAALTCACPGHDTGQPRAKPEY. A helical transmembrane segment spans residues 501–521; sequence WVLMLKYFMCLVVGITSGVWI. Residues 522 to 585 lie on the Cytoplasmic side of the membrane; sequence WSGKTVESWR…YHKQVSLSHV (64 aa). The Lys-Thr-X-X-X-Trp motif, mediates interaction with the PDZ domain of Dvl family members signature appears at 525–530; the sequence is KTVESW. Positions 583–585 match the PDZ-binding motif; the sequence is SHV.

This sequence belongs to the G-protein coupled receptor Fz/Smo family. As to quaternary structure, binding of unsaturated fatty acid molecules (via FZ domain) promotes homodimerization. Interacts with WNT2B. Interacts with WNT3A. Interacts with WNT7A. Interacts with GOPC. In terms of processing, ubiquitinated by RNF43 and ZNRF3, leading to its degradation by the proteasome.

It is found in the cell membrane. The protein resides in the golgi apparatus membrane. It localises to the synapse. The protein localises to the perikaryon. Its subcellular location is the cell projection. It is found in the dendrite. The protein resides in the axon. Receptor for Wnt proteins. Functions in the canonical Wnt/beta-catenin signaling pathway. In vitro activates WNT2, WNT10B, WNT5A, but not WNT2B or WNT4 signaling. In neurons, activation by WNT7A promotes formation of synapses. May be involved in transduction and intercellular transmission of polarity information during tissue morphogenesis and/or in differentiated tissues. Plays a role in yolk sac angiogenesis and in placental vascularization. Plays a role in ocular development. The protein is Frizzled-5 (FZD5) of Homo sapiens (Human).